A 154-amino-acid polypeptide reads, in one-letter code: 6,7-dimethyl-8-ribityllumazine synthase (154 aa).

Residues W23, 57–59 (AFE), and 81–83 (AVI) each bind 5-amino-6-(D-ribitylamino)uracil. (2S)-2-hydroxy-3-oxobutyl phosphate is bound at residue 86 to 87 (AT). H89 acts as the Proton donor in catalysis. Residue F114 participates in 5-amino-6-(D-ribitylamino)uracil binding. Residue R128 coordinates (2S)-2-hydroxy-3-oxobutyl phosphate.

It belongs to the DMRL synthase family.

The enzyme catalyses (2S)-2-hydroxy-3-oxobutyl phosphate + 5-amino-6-(D-ribitylamino)uracil = 6,7-dimethyl-8-(1-D-ribityl)lumazine + phosphate + 2 H2O + H(+). It functions in the pathway cofactor biosynthesis; riboflavin biosynthesis; riboflavin from 2-hydroxy-3-oxobutyl phosphate and 5-amino-6-(D-ribitylamino)uracil: step 1/2. Catalyzes the formation of 6,7-dimethyl-8-ribityllumazine by condensation of 5-amino-6-(D-ribitylamino)uracil with 3,4-dihydroxy-2-butanone 4-phosphate. This is the penultimate step in the biosynthesis of riboflavin. The protein is 6,7-dimethyl-8-ribityllumazine synthase of Sulfurimonas denitrificans (strain ATCC 33889 / DSM 1251) (Thiomicrospira denitrificans (strain ATCC 33889 / DSM 1251)).